We begin with the raw amino-acid sequence, 525 residues long: Coronin-2A (525 aa).

WD repeat units lie at residues 24 to 71 (NCYD…TGKL), 72 to 122 (DPHY…RNLT), 123 to 170 (AYRK…SVIT), 171 to 214 (SPMS…AGTV), 215 to 259 (LQEA…DNLS), 260 to 305 (VPLM…ADKP), and 306 to 342 (HLSY…RFYK). A coiled-coil region spans residues 485-524 (QMFYRQQEEIRRLRELLTQREVQAKQLELEIKNLRMGSEQ).

Belongs to the WD repeat coronin family. As to quaternary structure, binds actin. Component of the N-Cor repressor complex, at least composed of NCOR1, NCOR2, HDAC3, TBL1X, TBL1R, CORO2A and GPS2.

The protein is Coronin-2A (CORO2A) of Homo sapiens (Human).